The following is a 1070-amino-acid chain: Potassium/chloride cotransporter 3 (1070 aa).

15 helical membrane passes run 92 to 112, 114 to 134, 142 to 162, 174 to 194, 196 to 216, 228 to 248, 251 to 271, 400 to 420, 433 to 453, 473 to 493, 534 to 554, 557 to 577, 600 to 620, 791 to 811, and 827 to 847; these read GVML…TMFI, LFWV…AICC, ISLS…YFII, VGIL…VGGV, VILM…LHDT, LYGT…VKFV, LAPV…GGGI, FFML…GTNM, VGTI…AILF, TMVV…GAFL, PFLG…LGAV, IAEV…LIAV, LLGA…LACI, LVLF…LIVT, and FIDI…AYLL.

As to expression, expressed in the amphid sheath glia and the cephalic sheath glia. Also expressed in the inner labial and outer labial sheath and socket glia and as well as phasmid sheath glia.

The protein localises to the cell membrane. Its function is as follows. Probable potassium/chloride cotransporter that functions in the amphid sheath glial cells to regulate thermotaxis behavior. By maintaining chloride homeostasis, negatively regulates guanylate cyclase gcy-8 in the thermosensory AFD neurons and thereby controls the microvilli receptive ending morphology of the AFD neurons and thermotaxis. Modulates the temperature-evoked neuronal activity of the AFD neurons such as calcium responses to temperature gradients. Might also play a role in the chemotaxis behavior mediated by the sensory neurons AWA and AWC. The polypeptide is Potassium/chloride cotransporter 3 (kcc-3) (Caenorhabditis elegans).